Here is a 360-residue protein sequence, read N- to C-terminus: MNQSVQTIMIIAGGTGGHIFPGLSVARYLMNHGYKVVWIGSKDRIESELVPVYNIDIKYICIQGLRGKKIYQKLITLLFLIFFAMYQSFKIIRCWKPDIVLSMGGYVSGPSSLVAWLYGIPVIIHEQNRIMGLTNRYVSRFAKKILQGFPNTVNGAITSGNPLRYEILSIPDPVHRLEGRTGPIRVLVVGGSTGSFIFNKVIPEVFGKLFGKLIIWHQSGKKGFNDTIQAYKKLHCNSSNYKVVPFIDNMAHAYSWADVIISRSGALMVSEISYVGLPAIFVPFNYHKDYQQYWNAFQLVKSGSAIIIEQERFTSDYVSIILGNWNRKVLLNMAILSKSLEMSNATQLVAQTVMRYLNGK.

UDP-N-acetyl-alpha-D-glucosamine is bound by residues 15 to 17 (TGG), N128, R164, S192, I247, and Q292.

The protein belongs to the glycosyltransferase 28 family. MurG subfamily.

It is found in the cell inner membrane. It catalyses the reaction di-trans,octa-cis-undecaprenyl diphospho-N-acetyl-alpha-D-muramoyl-L-alanyl-D-glutamyl-meso-2,6-diaminopimeloyl-D-alanyl-D-alanine + UDP-N-acetyl-alpha-D-glucosamine = di-trans,octa-cis-undecaprenyl diphospho-[N-acetyl-alpha-D-glucosaminyl-(1-&gt;4)]-N-acetyl-alpha-D-muramoyl-L-alanyl-D-glutamyl-meso-2,6-diaminopimeloyl-D-alanyl-D-alanine + UDP + H(+). The protein operates within cell wall biogenesis; peptidoglycan biosynthesis. Its function is as follows. Cell wall formation. Catalyzes the transfer of a GlcNAc subunit on undecaprenyl-pyrophosphoryl-MurNAc-pentapeptide (lipid intermediate I) to form undecaprenyl-pyrophosphoryl-MurNAc-(pentapeptide)GlcNAc (lipid intermediate II). The sequence is that of UDP-N-acetylglucosamine--N-acetylmuramyl-(pentapeptide) pyrophosphoryl-undecaprenol N-acetylglucosamine transferase from Blochmanniella floridana.